The chain runs to 100 residues: Noncompact myelin-associated protein (100 aa).

Residues 1-28 are Extracellular-facing; sequence MTTATTLGDAVFSLNMTRGEDILYKSSG. Residues 29-49 form a helical membrane-spanning segment; that stretch reads AIVAAIVVVVVIIVTLVLILL. The Cytoplasmic portion of the chain corresponds to 50-100; it reads KMYNRRMRTRRELEPKSPKPPVPPALDPNSNGSQQPAAVTSDPADVPVETR. Residues 58–100 form a disordered region; the sequence is TRRELEPKSPKPPVPPALDPNSNGSQQPAAVTSDPADVPVETR. The segment covering 77-87 has biased composition (polar residues); it reads PNSNGSQQPAA.

In terms of processing, glycosylated. As to expression, expressed in the peripheral nervous system Schwann cells (at protein level).

The protein resides in the cell membrane. In terms of biological role, plays a role in myelin formation. The polypeptide is Noncompact myelin-associated protein (Ncmap) (Rattus norvegicus (Rat)).